The sequence spans 610 residues: Probable methyltransferase PMT22 (610 aa).

Residues 1 to 10 (MIKNIFQSRK) are Cytoplasmic-facing. A helical; Signal-anchor for type II membrane protein membrane pass occupies residues 11–31 (LSGLCVLSILLVSVTILLLTN). At 32-610 (DTIDLFPYLS…LVGLKSSWRP (579 aa)) the chain is on the lumenal side. The span at 56 to 69 (STPISSPTNDSSPP) shows a compositional bias: low complexity. The disordered stretch occupies residues 56–81 (STPISSPTNDSSPPLESPVNQTRVDD). N-linked (GlcNAc...) asparagine glycosylation is found at Asn64, Asn75, Asn100, Asn400, Asn469, and Asn546.

Belongs to the methyltransferase superfamily.

It localises to the endoplasmic reticulum membrane. The polypeptide is Probable methyltransferase PMT22 (Arabidopsis thaliana (Mouse-ear cress)).